The chain runs to 177 residues: MAKENRRKNNRNKEKDSTWQERVVQIRRVSKVVKGGKKLSFRAIVVVGNERGQVGVGVGKASDVIGAVRKGVADGKKQLVEVPLTRSNSIPHPMIGRGGAAKVMMRPAAPGTGVIAGGAVRTVLELAGVRNVLAKQLGSDNPLNNARATLHALASLRTFSEVAGERGIEVEKLYAAT.

In terms of domain architecture, S5 DRBM spans 19 to 82 (WQERVVQIRR…ADGKKQLVEV (64 aa)).

Belongs to the universal ribosomal protein uS5 family. In terms of assembly, part of the 30S ribosomal subunit. Contacts proteins S4 and S8.

In terms of biological role, with S4 and S12 plays an important role in translational accuracy. Functionally, located at the back of the 30S subunit body where it stabilizes the conformation of the head with respect to the body. The polypeptide is Small ribosomal subunit protein uS5 (Acaryochloris marina (strain MBIC 11017)).